A 97-amino-acid chain; its full sequence is HssA/B-like protein 44 (97 aa).

Disordered regions lie at residues 1–22 and 62–97; these read MTLF…SSIA and ASTS…CGCN. Residues 72–84 are compositionally biased toward basic residues; that stretch reads RPGRGHGGPHGHG. Positions 85–97 are enriched in gly residues; that stretch reads RGGSGSGSSCGCN.

The protein belongs to the hssA/B family.

This Dictyostelium discoideum (Social amoeba) protein is HssA/B-like protein 44 (hssl44).